The primary structure comprises 584 residues: NADPH-dependent diflavin oxidoreductase 1 (584 aa).

Residues Ile6–Tyr150 form the Flavodoxin-like domain. FMN contacts are provided by residues Ser12–Ala17, Ser59–Gly62, Cys97–Asn106, and Glu132. The FAD-binding FR-type domain maps to Arg199–Gln436. Residues Arg343, Arg373–Ser376, and Gly407–Ser410 each bind FAD. Residues Thr448, Ser503–Arg504, and Lys509–Gln513 each bind NADP(+). Trp584 serves as a coordination point for FAD.

This sequence belongs to the NADPH-dependent diflavin oxidoreductase NDOR1 family. In the N-terminal section; belongs to the flavodoxin family. The protein in the C-terminal section; belongs to the flavoprotein pyridine nucleotide cytochrome reductase family. As to quaternary structure, interacts with dre2; as part of the cytosolic iron-sulfur (Fe-S) protein assembly (CIA) machinery. FAD is required as a cofactor. FMN serves as cofactor.

The protein localises to the cytoplasm. Its subcellular location is the mitochondrion. It catalyses the reaction 2 oxidized [2Fe-2S]-[protein] + NADPH = 2 reduced [2Fe-2S]-[protein] + NADP(+) + H(+). NADPH-dependent reductase which is a central component of the cytosolic iron-sulfur (Fe-S) protein assembly (CIA) machinery. Transfers electrons from NADPH via its FAD and FMN prosthetic groups to the [2Fe-2S] cluster of dre2, another key component of the CIA machinery. In turn, this reduced cluster provides electrons for assembly of cytosolic iron-sulfur cluster proteins. Positively controls H(2)O(2)-induced cell death. This chain is NADPH-dependent diflavin oxidoreductase 1, found in Schizosaccharomyces pombe (strain 972 / ATCC 24843) (Fission yeast).